A 385-amino-acid polypeptide reads, in one-letter code: Acetate kinase (385 aa).

Asn-9 contributes to the Mg(2+) binding site. Lys-16 contacts ATP. Arg-87 contributes to the substrate binding site. Catalysis depends on Asp-144, which acts as the Proton donor/acceptor. ATP-binding positions include 202–206 and 277–279; these read HLGSG and DMR. Glu-373 is a Mg(2+) binding site.

It belongs to the acetokinase family. As to quaternary structure, homodimer. Mg(2+) serves as cofactor. Requires Mn(2+) as cofactor.

The protein localises to the cytoplasm. The catalysed reaction is acetate + ATP = acetyl phosphate + ADP. It functions in the pathway metabolic intermediate biosynthesis; acetyl-CoA biosynthesis; acetyl-CoA from acetate: step 1/2. In terms of biological role, catalyzes the formation of acetyl phosphate from acetate and ATP. Can also catalyze the reverse reaction. The protein is Acetate kinase of Rickettsia typhi (strain ATCC VR-144 / Wilmington).